Consider the following 255-residue polypeptide: 14-3-3 protein epsilon (255 aa).

Position 1 is an N-acetylmethionine (methionine 1). N6-acetyllysine; alternate is present on lysine 50. A Glycyl lysine isopeptide (Lys-Gly) (interchain with G-Cter in SUMO2); alternate cross-link involves residue lysine 50. The residue at position 65 (serine 65) is a Phosphoserine. An N6-acetyllysine mark is found at lysine 69, lysine 118, and lysine 123. The residue at position 131 (tyrosine 131) is a Phosphotyrosine. Threonine 137 is modified (phosphothreonine). Serine 210 carries the phosphoserine modification. The residue at position 232 (threonine 232) is a Phosphothreonine. The interval 234-255 (DMQGDGEEQNKEALQDVEDENQ) is disordered.

It belongs to the 14-3-3 family. As to quaternary structure, homodimer. Heterodimerizes with YWHAZ. Interacts with PKA-phosphorylated AANAT. Interacts with ABL1 (phosphorylated form); the interaction retains it in the cytoplasm. Interacts with ARHGEF28. Interacts with BEX3. Weakly interacts with CDKN1B. Interacts with the 'Thr-369' phosphorylated form of DAPK2. Interacts with DENND1A. Interacts with GAB2. Interacts with phosphorylated GRB10. Interacts with KSR1. Interacts with NDEL1. Interacts with PI4KB, TBC1D22A and TBC1D22B. Interacts with the phosphorylated (by AKT1) form of SRPK2. Interacts with TIAM2. Interacts with the 'Ser-1134' and 'Ser-1161' phosphorylated form of SOS1. Interacts with ZFP36 (via phosphorylated form). Interacts with SLITRK1. Interacts with HSF1 (via phosphorylated form); this interaction promotes HSF1 sequestration in the cytoplasm in a ERK-dependent manner. Interacts with RIPOR2. Interacts with KLHL22; required for the nuclear localization of KLHL22 upon amino acid starvation. Interacts with CRTC1. Interacts with CRTC2 (probably when phosphorylated at 'Ser-171'). Interacts with CRTC3 (probably when phosphorylated at 'Ser-162' and/or 'Ser-273'). Interacts with ATP2B1 and ATP2B3; this interaction inhibits calcium-transporting ATPase activity. Interacts with MEFV. Interacts with RNF115. Interacts with GPR15; this interaction promotes ER-to-Golgi transport of GPR15.

It is found in the nucleus. The protein localises to the cytoplasm. It localises to the melanosome. In terms of biological role, adapter protein implicated in the regulation of a large spectrum of both general and specialized signaling pathways. Binds to a large number of partners, usually by recognition of a phosphoserine or phosphothreonine motif. Binding generally results in the modulation of the activity of the binding partner. Positively regulates phosphorylated protein HSF1 nuclear export to the cytoplasm. This Rattus norvegicus (Rat) protein is 14-3-3 protein epsilon (Ywhae).